The primary structure comprises 329 residues: MVKTQRVVITPGEPAGIGPDLVVQLAQREWPVELVVCADATLLTDRAAMLGLPLTLRPYSPNSPAQPQTAGILTLLPVALRESVTAGQLAVENGHYVVETLARACDGCLNGEFAALITGPVHKGVINDAGIPFTGHTEFFEERSRAKKVVMMLATEELRVALATTHLPLRDIADAITPALLHEVIAILHHDLRTKFGIAEPRILVCGLNPHAGEGGHMGTEEIGTIIPVLDELRAQGMKLSGPLPADTLFQPKYLDNADAVLAMYHDQGLPVLKYQGFGRGVNITLGLPFIRTSVDHGTALELAGRGEADVGSFITALNLAIKMIVNTQ.

The substrate site is built by His136 and Thr137. Positions 166, 211, and 266 each coordinate a divalent metal cation. Substrate contacts are provided by Lys274, Asn283, and Arg292.

It belongs to the PdxA family. Homodimer. Zn(2+) is required as a cofactor. The cofactor is Mg(2+). Co(2+) serves as cofactor.

Its subcellular location is the cytoplasm. The catalysed reaction is 4-(phosphooxy)-L-threonine + NAD(+) = 3-amino-2-oxopropyl phosphate + CO2 + NADH. It functions in the pathway cofactor biosynthesis; pyridoxine 5'-phosphate biosynthesis; pyridoxine 5'-phosphate from D-erythrose 4-phosphate: step 4/5. Catalyzes the NAD(P)-dependent oxidation of 4-(phosphooxy)-L-threonine (HTP) into 2-amino-3-oxo-4-(phosphooxy)butyric acid which spontaneously decarboxylates to form 3-amino-2-oxopropyl phosphate (AHAP). This is 4-hydroxythreonine-4-phosphate dehydrogenase from Shigella dysenteriae serotype 1 (strain Sd197).